Consider the following 263-residue polypeptide: 4-hydroxy-2-oxo-heptane-1,7-dioate aldolase (263 aa).

The active-site Proton acceptor is the His-45. Residue Gln-147 participates in substrate binding. Residue Glu-149 coordinates a divalent metal cation. Residues Ala-174 and Asp-175 each contribute to the substrate site. Asp-175 is a binding site for a divalent metal cation.

The protein belongs to the HpcH/HpaI aldolase family. In terms of assembly, homohexamer; trimer of dimers. A divalent metal cation serves as cofactor.

The catalysed reaction is 4-hydroxy-2-oxoheptanedioate = succinate semialdehyde + pyruvate. It participates in aromatic compound metabolism; 4-hydroxyphenylacetate degradation; pyruvate and succinate semialdehyde from 4-hydroxyphenylacetate: step 7/7. Its function is as follows. Catalyzes the reversible retro-aldol cleavage of 4-hydroxy-2-ketoheptane-1,7-dioate (HKHD) to pyruvate and succinic semialdehyde. The sequence is that of 4-hydroxy-2-oxo-heptane-1,7-dioate aldolase from Salmonella paratyphi A (strain ATCC 9150 / SARB42).